The following is a 450-amino-acid chain: tRNA-2-methylthio-N(6)-dimethylallyladenosine synthase (450 aa).

The MTTase N-terminal domain occupies 14-132; sequence GEFFIETWGC…FPNYLNEVKK (119 aa). [4Fe-4S] cluster-binding residues include cysteine 23, cysteine 59, cysteine 93, cysteine 169, cysteine 173, and cysteine 176. Residues 155–385 form the Radical SAM core domain; sequence RKNSMKAFVT…VEVVNEISAK (231 aa). Residues 388-450 enclose the TRAM domain; that stretch reads KAYEGKIEEV…NSFSLTGEEI (63 aa).

It belongs to the methylthiotransferase family. MiaB subfamily. As to quaternary structure, monomer. [4Fe-4S] cluster is required as a cofactor.

It localises to the cytoplasm. It carries out the reaction N(6)-dimethylallyladenosine(37) in tRNA + (sulfur carrier)-SH + AH2 + 2 S-adenosyl-L-methionine = 2-methylsulfanyl-N(6)-dimethylallyladenosine(37) in tRNA + (sulfur carrier)-H + 5'-deoxyadenosine + L-methionine + A + S-adenosyl-L-homocysteine + 2 H(+). Catalyzes the methylthiolation of N6-(dimethylallyl)adenosine (i(6)A), leading to the formation of 2-methylthio-N6-(dimethylallyl)adenosine (ms(2)i(6)A) at position 37 in tRNAs that read codons beginning with uridine. The protein is tRNA-2-methylthio-N(6)-dimethylallyladenosine synthase of Clostridium botulinum (strain Loch Maree / Type A3).